A 441-amino-acid polypeptide reads, in one-letter code: Ribosomal protein uS12 methylthiotransferase RimO (441 aa).

The 111-residue stretch at 7–117 (ASIAMISLGC…VVLEVHRAAP (111 aa)) folds into the MTTase N-terminal domain. The [4Fe-4S] cluster site is built by cysteine 16, cysteine 52, cysteine 81, cysteine 150, cysteine 154, and cysteine 157. The Radical SAM core domain maps to 136-373 (LTPRHYAYLK…MAHQQAISAA (238 aa)). The region spanning 376-441 (QTRVGREIDV…DEYDLHGDAV (66 aa)) is the TRAM domain.

It belongs to the methylthiotransferase family. RimO subfamily. [4Fe-4S] cluster is required as a cofactor.

The protein resides in the cytoplasm. The enzyme catalyses L-aspartate(89)-[ribosomal protein uS12]-hydrogen + (sulfur carrier)-SH + AH2 + 2 S-adenosyl-L-methionine = 3-methylsulfanyl-L-aspartate(89)-[ribosomal protein uS12]-hydrogen + (sulfur carrier)-H + 5'-deoxyadenosine + L-methionine + A + S-adenosyl-L-homocysteine + 2 H(+). Catalyzes the methylthiolation of an aspartic acid residue of ribosomal protein uS12. The sequence is that of Ribosomal protein uS12 methylthiotransferase RimO from Bordetella petrii (strain ATCC BAA-461 / DSM 12804 / CCUG 43448).